Consider the following 402-residue polypeptide: MWRGLGLALALCLLLTGGTESQGQSSYCKQPPPWSIKDQDPMLNSYGSVTVVALLQASUYLCILQASRLEDLRVKLEKEGYSNISYVVVNHQGISSRLKYVHLKNKVSEHIPVYQQEENQPDVWTLLNGNKDDFLIYDRCGRLVYHLGLPYSFLTFTYVEDSIKTVYCEDKCGNCSLKALEDEDVCKNVFLATKEKTAEASQRHHHPHPHSHPHPHPHPHPHPHPHPHHGHQLHENAHLSESPKPDTPDTPENPPPSGLHHHHHRHKGPQRQGHSDNCDTPVGSESLQPSLPQKKLURKRCINQLLUQFPKDSESALSSCCCHCRHLVFEKTGSAITUQCTEKLPSLCSUQGLLAEENVIESUQURLPPAAUQAAGQQLNPTEASTKUSUKNKAKMUKUPSN.

A signal peptide spans 1–19; it reads MWRGLGLALALCLLLTGGT. Selenocysteine 59 is a non-standard amino acid (selenocysteine). Asparagine 83 and asparagine 174 each carry an N-linked (GlcNAc...) asparagine glycan. A disordered region spans residues 196–291; sequence KTAEASQRHH…VGSESLQPSL (96 aa). Basic residues predominate over residues 203–231; the sequence is RHHHPHPHSHPHPHPHPHPHPHPHPHHGH. Repeat copies occupy residues 204–205, 206–207, 208–209, 210–211, 212–213, 214–215, 216–217, 218–219, 220–221, 222–223, 224–225, 226–227, and 228–229. The 13 X 2 AA tandem repeats of H-[PHS] stretch occupies residues 204–229; that stretch reads HHHPHPHSHPHPHPHPHPHPHPHPHH. Residues 232 to 247 show a composition bias toward basic and acidic residues; sequence QLHENAHLSESPKPDT. Over residues 259 to 269 the composition is skewed to basic residues; it reads LHHHHHRHKGP. Serine 284 bears the Phosphoserine mark. Non-standard amino acids (selenocysteine) are located at selenocysteine 297, selenocysteine 307, selenocysteine 338, selenocysteine 350, selenocysteine 363, selenocysteine 365, selenocysteine 372, selenocysteine 388, selenocysteine 390, selenocysteine 397, and selenocysteine 399. Positions 367–402 are disordered; that stretch reads LPPAAUQAAGQQLNPTEASTKUSUKNKAKMUKUPSN.

This sequence belongs to the selenoprotein P family. Phosphorylation sites are present in the extracellular medium. As to expression, brain and kidney. Most prominently expressed in the cerebellar cortex, hippocampus and olfactory bulb.

It is found in the secreted. Its function is as follows. Constitutes a major selenium pool in the brain and may play an important role in developing and/or modulating the morphology of neurons and/or glial cells. In Bos taurus (Bovine), this protein is Selenoprotein P.